Consider the following 621-residue polypeptide: (-)-beta-phellandrene synthase 1, chloroplastic (621 aa).

The transit peptide at 1–49 (MALALVSVAPLVSMRRSLFSSPYELKSIDKTIPNLVMCRKRMLGRPSIR) directs the protein to the chloroplast. 3 residues coordinate Mg(2+): aspartate 372, aspartate 376, and aspartate 524. Positions 372 to 376 (DDIYD) match the DDXXD motif motif.

The protein belongs to the terpene synthase family. Tpsd subfamily. Requires Mg(2+) as cofactor. Mn(2+) serves as cofactor.

It localises to the plastid. It is found in the chloroplast. It carries out the reaction (2E)-geranyl diphosphate = (-)-beta-phellandrene + diphosphate. It functions in the pathway terpene metabolism; oleoresin biosynthesis. It participates in secondary metabolite biosynthesis; terpenoid biosynthesis. Its function is as follows. Monoterpene synthase (TPS) involved in the biosynthesis of monoterpene natural products included in conifer oleoresin secretions and volatile emissions; these compounds contribute to biotic and abiotic stress defense against herbivores and pathogens. Catalyzes the conversion of (2E)-geranyl diphosphate (GPP) to (-)-beta-phellandrene. The sequence is that of (-)-beta-phellandrene synthase 1, chloroplastic from Pinus banksiana (Jack pine).